A 139-amino-acid chain; its full sequence is Transcription antitermination protein NusB (139 aa).

This sequence belongs to the NusB family.

Functionally, involved in transcription antitermination. Required for transcription of ribosomal RNA (rRNA) genes. Binds specifically to the boxA antiterminator sequence of the ribosomal RNA (rrn) operons. In Baumannia cicadellinicola subsp. Homalodisca coagulata, this protein is Transcription antitermination protein NusB.